We begin with the raw amino-acid sequence, 428 residues long: Adenylosuccinate synthetase (428 aa).

Residues 12–18 (GDEGKGK) and 40–42 (GHT) each bind GTP. Residue D13 is the Proton acceptor of the active site. Mg(2+) is bound by residues D13 and G40. IMP contacts are provided by residues 13–16 (DEGK), 38–41 (NAGH), T128, R142, Q222, T237, and R301. Residue H41 is the Proton donor of the active site. Residue 297-303 (TVTGRSR) coordinates substrate. Residues R303, 329 to 331 (KLD), and 411 to 413 (STS) contribute to the GTP site.

It belongs to the adenylosuccinate synthetase family. As to quaternary structure, homodimer. The cofactor is Mg(2+).

It is found in the cytoplasm. It carries out the reaction IMP + L-aspartate + GTP = N(6)-(1,2-dicarboxyethyl)-AMP + GDP + phosphate + 2 H(+). It participates in purine metabolism; AMP biosynthesis via de novo pathway; AMP from IMP: step 1/2. Plays an important role in the de novo pathway of purine nucleotide biosynthesis. Catalyzes the first committed step in the biosynthesis of AMP from IMP. This chain is Adenylosuccinate synthetase, found in Phenylobacterium zucineum (strain HLK1).